The sequence spans 321 residues: Peroxidase 27 (321 aa).

The signal sequence occupies residues 1–23; sequence MAASKRLVVSCLFLVLLFAQANS. 4 disulfides stabilise this stretch: Cys35–Cys113, Cys68–Cys73, Cys119–Cys317, and Cys196–Cys228. Catalysis depends on His66, which acts as the Proton acceptor. Ca(2+) contacts are provided by Asp67, Val70, Gly72, Asp74, and Ser76. Pro159 contributes to the substrate binding site. Asn164 carries N-linked (GlcNAc...) asparagine glycosylation. A heme b-binding site is contributed by His189. Ca(2+) is bound at residue Thr190. An N-linked (GlcNAc...) asparagine glycan is attached at Asn205. Asp240, Ser243, and Asp248 together coordinate Ca(2+).

The protein belongs to the peroxidase family. Classical plant (class III) peroxidase subfamily. Heme b is required as a cofactor. The cofactor is Ca(2+). As to expression, expressed in the whole plant, but preferentially in roots and flowers.

The protein localises to the secreted. It catalyses the reaction 2 a phenolic donor + H2O2 = 2 a phenolic radical donor + 2 H2O. Functionally, removal of H(2)O(2), oxidation of toxic reductants, biosynthesis and degradation of lignin, suberization, auxin catabolism, response to environmental stresses such as wounding, pathogen attack and oxidative stress. These functions might be dependent on each isozyme/isoform in each plant tissue. This is Peroxidase 27 (PER27) from Arabidopsis thaliana (Mouse-ear cress).